The following is a 410-amino-acid chain: Probable ATP-dependent RNA helicase MG308 (410 aa).

Residues 26–179 form the Helicase ATP-binding domain; that stretch reads VFKLWPFQNI…KKQVINTKVI (154 aa). 39-46 serves as a coordination point for ATP; sequence AETGSGKT. The DEID box motif lies at 126-129; the sequence is DEID. A Helicase C-terminal domain is found at 190–357; it reads LVKHFVVHLN…DLKFLTENNQ (168 aa).

The protein belongs to the DEAD box helicase family.

It catalyses the reaction ATP + H2O = ADP + phosphate + H(+). The polypeptide is Probable ATP-dependent RNA helicase MG308 (Mycoplasma genitalium (strain ATCC 33530 / DSM 19775 / NCTC 10195 / G37) (Mycoplasmoides genitalium)).